A 146-amino-acid polypeptide reads, in one-letter code: Hemoglobin subunit beta (146 aa).

Residues 2-146 (HWSAEEKQLI…VAHALARKYH (145 aa)) enclose the Globin domain. Residues His63 and His92 each contribute to the heme b site.

Belongs to the globin family. As to quaternary structure, heterotetramer of two alpha chains and two beta chains. In terms of tissue distribution, red blood cells.

Functionally, involved in oxygen transport from the lung to the various peripheral tissues. This is Hemoglobin subunit beta (HBB) from Psittacula krameri (Rose-ringed parakeet).